Reading from the N-terminus, the 103-residue chain is Small ribosomal subunit protein uS10 (103 aa).

Belongs to the universal ribosomal protein uS10 family. In terms of assembly, part of the 30S ribosomal subunit.

Functionally, involved in the binding of tRNA to the ribosomes. In Marinomonas sp. (strain MWYL1), this protein is Small ribosomal subunit protein uS10.